The chain runs to 374 residues: PqqA peptide cyclase (374 aa).

The Radical SAM core domain occupies 4–224 (IEPPMGLLAE…ERLKGVMVID (221 aa)). Residues cysteine 18, cysteine 22, and cysteine 25 each coordinate [4Fe-4S] cluster.

Belongs to the radical SAM superfamily. PqqE family. As to quaternary structure, interacts with PqqD. The interaction is necessary for activity of PqqE. Requires [4Fe-4S] cluster as cofactor.

It carries out the reaction [PQQ precursor protein] + S-adenosyl-L-methionine = E-Y cross-linked-[PQQ precursor protein] + 5'-deoxyadenosine + L-methionine + H(+). It functions in the pathway cofactor biosynthesis; pyrroloquinoline quinone biosynthesis. Its function is as follows. Catalyzes the cross-linking of a glutamate residue and a tyrosine residue in the PqqA protein as part of the biosynthesis of pyrroloquinoline quinone (PQQ). In Granulibacter bethesdensis (strain ATCC BAA-1260 / CGDNIH1), this protein is PqqA peptide cyclase.